A 95-amino-acid polypeptide reads, in one-letter code: Histone-like DNA-binding protein (95 aa).

This sequence belongs to the bacterial histone-like protein family.

This is Histone-like DNA-binding protein from Rickettsia typhi (strain ATCC VR-144 / Wilmington).